Consider the following 459-residue polypeptide: ATP synthase subunit beta (459 aa).

ATP is bound at residue 149 to 156; that stretch reads GGAGVGKT.

It belongs to the ATPase alpha/beta chains family. In terms of assembly, F-type ATPases have 2 components, CF(1) - the catalytic core - and CF(0) - the membrane proton channel. CF(1) has five subunits: alpha(3), beta(3), gamma(1), delta(1), epsilon(1). CF(0) has three main subunits: a(1), b(2) and c(9-12). The alpha and beta chains form an alternating ring which encloses part of the gamma chain. CF(1) is attached to CF(0) by a central stalk formed by the gamma and epsilon chains, while a peripheral stalk is formed by the delta and b chains.

Its subcellular location is the cell inner membrane. The enzyme catalyses ATP + H2O + 4 H(+)(in) = ADP + phosphate + 5 H(+)(out). Produces ATP from ADP in the presence of a proton gradient across the membrane. The catalytic sites are hosted primarily by the beta subunits. The protein is ATP synthase subunit beta of Pseudomonas syringae pv. syringae (strain B728a).